Consider the following 404-residue polypeptide: Argininosuccinate synthase (404 aa).

Residues 12 to 20 (AYSGGLDTS) and Ala-40 each bind ATP. 2 residues coordinate L-citrulline: Tyr-92 and Ser-97. Gly-122 contributes to the ATP binding site. L-aspartate is bound by residues Thr-124, Asn-128, and Asp-129. An L-citrulline-binding site is contributed by Asn-128. Residues Arg-132, Ser-181, Ser-190, Glu-266, and Tyr-278 each coordinate L-citrulline.

It belongs to the argininosuccinate synthase family. Type 1 subfamily. Homotetramer.

It is found in the cytoplasm. It carries out the reaction L-citrulline + L-aspartate + ATP = 2-(N(omega)-L-arginino)succinate + AMP + diphosphate + H(+). The protein operates within amino-acid biosynthesis; L-arginine biosynthesis; L-arginine from L-ornithine and carbamoyl phosphate: step 2/3. In Photorhabdus laumondii subsp. laumondii (strain DSM 15139 / CIP 105565 / TT01) (Photorhabdus luminescens subsp. laumondii), this protein is Argininosuccinate synthase.